A 352-amino-acid chain; its full sequence is NADH-ubiquinone oxidoreductase chain 2 (352 aa).

The next 11 helical transmembrane spans lie at 4–24 (MISI…VSAE), 26–46 (WFVI…ILWF), 60–80 (FLVQ…QAWF), 96–116 (LCLS…FWLP), 124–144 (FIQG…LLFY), 150–170 (FSYF…WGGL), 178–198 (ILAF…AFSL), 205–225 (LFIY…LSIF), 241–261 (ITLV…TGFI), 274–294 (GFIF…FFYL), and 330–350 (LVSS…PLYI).

Belongs to the complex I subunit 2 family.

Its subcellular location is the mitochondrion inner membrane. It catalyses the reaction a ubiquinone + NADH + 5 H(+)(in) = a ubiquinol + NAD(+) + 4 H(+)(out). Its function is as follows. Core subunit of the mitochondrial membrane respiratory chain NADH dehydrogenase (Complex I) that is believed to belong to the minimal assembly required for catalysis. Complex I functions in the transfer of electrons from NADH to the respiratory chain. The immediate electron acceptor for the enzyme is believed to be ubiquinone. This is NADH-ubiquinone oxidoreductase chain 2 (ND2) from Paracentrotus lividus (Common sea urchin).